We begin with the raw amino-acid sequence, 115 residues long: Large ribosomal subunit protein bL20 (115 aa).

The protein belongs to the bacterial ribosomal protein bL20 family.

Binds directly to 23S ribosomal RNA and is necessary for the in vitro assembly process of the 50S ribosomal subunit. It is not involved in the protein synthesizing functions of that subunit. In Borrelia turicatae (strain 91E135), this protein is Large ribosomal subunit protein bL20.